The sequence spans 200 residues: Urease accessory protein UreG (200 aa).

Residue 8–15 (GPVGSGKT) participates in GTP binding.

This sequence belongs to the SIMIBI class G3E GTPase family. UreG subfamily. Homodimer. UreH, UreF and UreG form a complex that acts as a GTP-hydrolysis-dependent molecular chaperone, activating the urease apoprotein by helping to assemble the nickel containing metallocenter of UreC. The UreE protein probably delivers the nickel.

It is found in the cytoplasm. Its function is as follows. Facilitates the functional incorporation of the urease nickel metallocenter. This process requires GTP hydrolysis, probably effectuated by UreG. The protein is Urease accessory protein UreG of Helicobacter hepaticus (strain ATCC 51449 / 3B1).